A 517-amino-acid chain; its full sequence is MNQINYLTSERNFLPPTDRDILNLGNNSSNSNNNSSSSNNNNNNNNNNNNNNNNNNNNSNSNSNSNNNNNNNSNNNNSSSSPDHMSLHSNGMDIHHNQQNHHYQNIQHQPHHFQQNYDERRIDYGNNNNNNNTNSMNNSNNNSNNNSNNNSNNNNNNNNNNNNNNNNNNSNNNNNSNNNNFNYNIKQQPQQTLQNQIVNMNGNIITSNGNHHYPTPHMLYARMAEIVEEPLYVNAKQYNRILKRRAARAKLESENKLPKTRKAYQHESRHQHAIRRQRGCGGRFLTKADQAKLDAQNAANAAAAAANPNASSTSTTTSNITNNNNNNNNNNNTNNNNNNNNTNVNGSGGSGGSNKIASSDDDIENDVENDSDSANIKNNSNSPNQSSSSPPPSKSKVVKKSNTINKRNNNINNNNNNNNNNNNEKTQPISSSSSSSSPLLNNGHIQAQQNQSPSSSPSQNLPPLNFSNNINNNINNNGNPTNFNNNNPNNNPNNNNNNNPNNNSFLPPLSNFSNNRS.

A compositionally biased stretch (polar residues) spans 1-11 (MNQINYLTSER). Disordered regions lie at residues 1–95 (MNQI…MDIH), 121–183 (RIDY…NFNY), 252–281 (ESEN…RGCG), and 304–517 (AAAN…NNRS). 2 stretches are compositionally biased toward low complexity: residues 26 to 81 (NNSS…SSSS) and 126 to 183 (NNNN…NFNY). Positions 232–255 (YVNAKQYNRILKRRAARAKLESEN) match the Subunit association domain (SAD) motif. A DNA-binding region (NFYA/HAP2-type) is located at residues 262–287 (KAYQHESRHQHAIRRQRGCGGRFLTK). A compositionally biased stretch (low complexity) spans 304-345 (AAANPNASSTSTTTSNITNNNNNNNNNNNTNNNNNNNNTNVN). Over residues 359–371 (SDDDIENDVENDS) the composition is skewed to acidic residues. Composition is skewed to low complexity over residues 377–388 (KNNSNSPNQSSS) and 408–423 (NNNI…NNNN). Residues 438–447 (PLLNNGHIQA) show a composition bias toward polar residues. Residues 448-517 (QQNQSPSSSP…PLSNFSNNRS (70 aa)) show a composition bias toward low complexity.

Belongs to the NFYA/HAP2 subunit family. In terms of assembly, heterotrimeric transcription factor composed of three components, nfyA, nfyB and nfyC. nfyB and nfyC must interact and dimerize for nfyA association and DNA binding.

It is found in the nucleus. Its function is as follows. Component of the NF-Y/HAP transcription factor complex. The NF-Y complex stimulates the transcription of various genes by recognizing and binding to a CCAAT motif in promoters. This is Nuclear transcription factor Y subunit alpha (nfyA) from Dictyostelium discoideum (Social amoeba).